A 333-amino-acid chain; its full sequence is Phosphate acyltransferase (333 aa).

It belongs to the PlsX family. As to quaternary structure, homodimer. Probably interacts with PlsY.

It is found in the cytoplasm. The catalysed reaction is a fatty acyl-[ACP] + phosphate = an acyl phosphate + holo-[ACP]. Its pathway is lipid metabolism; phospholipid metabolism. Functionally, catalyzes the reversible formation of acyl-phosphate (acyl-PO(4)) from acyl-[acyl-carrier-protein] (acyl-ACP). This enzyme utilizes acyl-ACP as fatty acyl donor, but not acyl-CoA. The polypeptide is Phosphate acyltransferase (Lactobacillus helveticus (strain DPC 4571)).